The primary structure comprises 103 residues: Urease subunit beta (103 aa).

It belongs to the urease beta subunit family. In terms of assembly, heterotrimer of UreA (gamma), UreB (beta) and UreC (alpha) subunits. Three heterotrimers associate to form the active enzyme.

It localises to the cytoplasm. The catalysed reaction is urea + 2 H2O + H(+) = hydrogencarbonate + 2 NH4(+). It participates in nitrogen metabolism; urea degradation; CO(2) and NH(3) from urea (urease route): step 1/1. The protein is Urease subunit beta of Streptomyces avermitilis (strain ATCC 31267 / DSM 46492 / JCM 5070 / NBRC 14893 / NCIMB 12804 / NRRL 8165 / MA-4680).